A 689-amino-acid polypeptide reads, in one-letter code: Glycine--tRNA ligase beta subunit (689 aa).

The protein belongs to the class-II aminoacyl-tRNA synthetase family. In terms of assembly, tetramer of two alpha and two beta subunits.

It localises to the cytoplasm. It catalyses the reaction tRNA(Gly) + glycine + ATP = glycyl-tRNA(Gly) + AMP + diphosphate. In Salmonella heidelberg (strain SL476), this protein is Glycine--tRNA ligase beta subunit.